The following is a 143-amino-acid chain: Transcriptional regulator MraZ (143 aa).

2 SpoVT-AbrB domains span residues 5 to 47 and 76 to 119; these read EYHH…PIEE and AMES…SAER.

Belongs to the MraZ family. In terms of assembly, forms oligomers.

It localises to the cytoplasm. It is found in the nucleoid. The polypeptide is Transcriptional regulator MraZ (Lactobacillus gasseri (strain ATCC 33323 / DSM 20243 / BCRC 14619 / CIP 102991 / JCM 1131 / KCTC 3163 / NCIMB 11718 / NCTC 13722 / AM63)).